Consider the following 249-residue polypeptide: Probable septum site-determining protein MinC (249 aa).

The interval serine 89–isoleucine 130 is disordered. The segment covering proline 119–proline 129 has biased composition (low complexity).

This sequence belongs to the MinC family. Interacts with MinD and FtsZ.

Cell division inhibitor that blocks the formation of polar Z ring septums. Rapidly oscillates between the poles of the cell to destabilize FtsZ filaments that have formed before they mature into polar Z rings. Prevents FtsZ polymerization. The sequence is that of Probable septum site-determining protein MinC from Rhizobium meliloti (strain 1021) (Ensifer meliloti).